The following is a 353-amino-acid chain: Ion-translocating oxidoreductase complex subunit D (353 aa).

Transmembrane regions (helical) follow at residues 20–39, 68–88, and 129–149; these read LMRLVIYATLPGVLAQWYFF, PISHELFDGSALLTALLLGIC, and VMLLVSFPLQMTLWQPPLTLV. FMN phosphoryl threonine is present on Thr-187. The next 4 helical transmembrane spans lie at 215 to 235, 238 to 258, 267 to 287, and 300 to 320; these read LALGWEWVNAGFLLGGLFLIS, AIAWQTPISFLLSLFICSFIG, ASTMFHWFSGATMLGAFFILT, and IIVGLLAGLLVYLIRTSGGYP.

Belongs to the NqrB/RnfD family. As to quaternary structure, the complex is composed of six subunits: RnfA, RnfB, RnfC, RnfD, RnfE and RnfG. Requires FMN as cofactor.

The protein resides in the cell inner membrane. Its function is as follows. Part of a membrane-bound complex that couples electron transfer with translocation of ions across the membrane. This Colwellia psychrerythraea (strain 34H / ATCC BAA-681) (Vibrio psychroerythus) protein is Ion-translocating oxidoreductase complex subunit D.